The primary structure comprises 84 residues: UPF0473 protein CLI_2624 (84 aa).

This sequence belongs to the UPF0473 family.

The chain is UPF0473 protein CLI_2624 from Clostridium botulinum (strain Langeland / NCTC 10281 / Type F).